Consider the following 387-residue polypeptide: Protein-glutamate methylesterase/protein-glutamine glutaminase 2 (387 aa).

Positions 4 to 121 constitute a Response regulatory domain; sequence KVLVVDDSGF…SRNPQKVKQL (118 aa). 4-aspartylphosphate is present on aspartate 55. Positions 148-183 are enriched in low complexity; it reads AAPAAPTSSSRAPAPTTAPARAVPTRTAAPATAPAA. Residues 148-199 form a disordered region; it reads AAPAAPTSSSRAPAPTTAPARAVPTRTAAPATAPAAHAHHAPAHPTTSGTPK. One can recognise a CheB-type methylesterase domain in the interval 192-384; sequence PTTSGTPKRK…LDDIGRHLVE (193 aa). Catalysis depends on residues serine 211, histidine 238, and aspartate 331.

It belongs to the CheB family. In terms of processing, phosphorylated by CheA. Phosphorylation of the N-terminal regulatory domain activates the methylesterase activity.

Its subcellular location is the cytoplasm. It carries out the reaction [protein]-L-glutamate 5-O-methyl ester + H2O = L-glutamyl-[protein] + methanol + H(+). The enzyme catalyses L-glutaminyl-[protein] + H2O = L-glutamyl-[protein] + NH4(+). Its function is as follows. Involved in chemotaxis. Part of a chemotaxis signal transduction system that modulates chemotaxis in response to various stimuli. Catalyzes the demethylation of specific methylglutamate residues introduced into the chemoreceptors (methyl-accepting chemotaxis proteins or MCP) by CheR. Also mediates the irreversible deamidation of specific glutamine residues to glutamic acid. The protein is Protein-glutamate methylesterase/protein-glutamine glutaminase 2 of Pseudomonas savastanoi pv. phaseolicola (strain 1448A / Race 6) (Pseudomonas syringae pv. phaseolicola (strain 1448A / Race 6)).